Reading from the N-terminus, the 503-residue chain is Probable voltage-gated potassium channel subunit kvs-4 (503 aa).

The Cytoplasmic segment spans residues 1-231 (MNSAIMQGAA…EPASSGKAQA (231 aa)). The Required for dendritic localization motif lies at 217–219 (WNI). A helical membrane pass occupies residues 232 to 252 (FAVCSVVFVLISISGLVLGSL). At 253–275 (PELQVATKQRNNLTGEEFTEMEP) the chain is on the extracellular side. Asn264 is a glycosylation site (N-linked (GlcNAc...) asparagine). Residues 276–296 (MPILGYIEYVCIVWFTMEYGL) form a helical membrane-spanning segment. Over 297–313 (KMLVSAERSKTFRQLLN) the chain is Cytoplasmic. A helical membrane pass occupies residues 314–334 (IIDLLAILPFIIEMLLLIFGI). Over 335-346 (STEQLRDLKGAF) the chain is Extracellular. A helical; Voltage-sensor membrane pass occupies residues 347-366 (LVIRILRVLRVIRVLKLGRY). Over 367-383 (SSGLQMFGKTLKASFRQ) the chain is Cytoplasmic. Residues 368-383 (SGLQMFGKTLKASFRQ) are S4-S5 linker. The chain crosses the membrane as a helical span at residues 384 to 404 (LGMMAMVVMTGVIFFSTLVYF). At 405 to 417 (LEKDEPASKFHSI) the chain is on the extracellular side. An intramembrane region (helical) is located at residues 418-429 (PAACWWCIVTMT). The stretch at 430 to 434 (TVGYG) is an intramembrane region. Residues 430 to 435 (TVGYGD) carry the Selectivity filter motif. The Extracellular segment spans residues 435-445 (DLTPVTVPGKL). A helical membrane pass occupies residues 446–466 (VATGAIACGVLVLALPITIIV). At 467-503 (DNFMKVAETERPAGGNRYRTSQYPKATKSEQMILKVT) the chain is on the cytoplasmic side. The Required for dendritic localization motif lies at 496–500 (EQMIL).

Belongs to the potassium channel family. B (Shab) (TC 1.A.1.2) subfamily. Kv2.2/KCNB2 sub-subfamily. In terms of assembly, homotetramer or heterotetramer. Interacts with unc-101 (via N-terminus); which targets kvs-4 to dendrites. As to expression, expressed in the cholinergic motor neuron DA9, mechanosensory neurons ALM and PLM, and the interneuron PVPL.

It localises to the cell membrane. It is found in the perikaryon. The protein localises to the cell projection. The protein resides in the axon. Its subcellular location is the dendrite. Functionally, voltage-gated potassium channel that mediates transmembrane potassium transport in excitable membranes. This Caenorhabditis elegans protein is Probable voltage-gated potassium channel subunit kvs-4.